The sequence spans 903 residues: Cell division cycle protein 48 homolog MJ1156 (903 aa).

ATP is bound by residues 220–227 (GPPGTGKT) and 493–500 (GPPGTGKT).

Belongs to the AAA ATPase family. CDC48 subfamily.

The polypeptide is Cell division cycle protein 48 homolog MJ1156 (Methanocaldococcus jannaschii (strain ATCC 43067 / DSM 2661 / JAL-1 / JCM 10045 / NBRC 100440) (Methanococcus jannaschii)).